The chain runs to 380 residues: Cytochrome b (380 aa).

4 consecutive transmembrane segments (helical) span residues 33 to 53 (FGSLLGACLILQITTGLFLAM), 77 to 98 (WTIRYLHANGASMFFICLFLHI), 113 to 133 (WNIGIILLLTTMAAAFMGYVL), and 178 to 198 (FFTFHFILPFIITALTTLHLL). Residues histidine 83 and histidine 97 each contribute to the heme b site. Residues histidine 182 and histidine 196 each contribute to the heme b site. Histidine 201 contributes to the a ubiquinone binding site. A run of 4 helical transmembrane segments spans residues 226–246 (IKDILGLFLFLLTLMTLTLFS), 288–308 (LGGVLALLLSILILAMIPILH), 320–340 (LSQLLYWFLIADLFTLTWIGG), and 347–367 (FITIGQVASVLYFTTILFLMP).

Belongs to the cytochrome b family. The cytochrome bc1 complex contains 11 subunits: 3 respiratory subunits (MT-CYB, CYC1 and UQCRFS1), 2 core proteins (UQCRC1 and UQCRC2) and 6 low-molecular weight proteins (UQCRH/QCR6, UQCRB/QCR7, UQCRQ/QCR8, UQCR10/QCR9, UQCR11/QCR10 and a cleavage product of UQCRFS1). This cytochrome bc1 complex then forms a dimer. It depends on heme b as a cofactor.

The protein localises to the mitochondrion inner membrane. In terms of biological role, component of the ubiquinol-cytochrome c reductase complex (complex III or cytochrome b-c1 complex) that is part of the mitochondrial respiratory chain. The b-c1 complex mediates electron transfer from ubiquinol to cytochrome c. Contributes to the generation of a proton gradient across the mitochondrial membrane that is then used for ATP synthesis. This Gorilla gorilla gorilla (Western lowland gorilla) protein is Cytochrome b (MT-CYB).